The chain runs to 373 residues: 3-dehydroquinate synthase (373 aa).

NAD(+) is bound by residues Gly120–Asp124, Thr144–Thr145, Lys157, Lys166, and Phe184–Thr187. Zn(2+)-binding residues include Glu199, His262, and His278.

It belongs to the sugar phosphate cyclases superfamily. Dehydroquinate synthase family. Requires NAD(+) as cofactor. The cofactor is Co(2+). It depends on Zn(2+) as a cofactor.

It localises to the cytoplasm. It carries out the reaction 7-phospho-2-dehydro-3-deoxy-D-arabino-heptonate = 3-dehydroquinate + phosphate. The protein operates within metabolic intermediate biosynthesis; chorismate biosynthesis; chorismate from D-erythrose 4-phosphate and phosphoenolpyruvate: step 2/7. Its function is as follows. Catalyzes the conversion of 3-deoxy-D-arabino-heptulosonate 7-phosphate (DAHP) to dehydroquinate (DHQ). In Clostridium tetani (strain Massachusetts / E88), this protein is 3-dehydroquinate synthase.